A 242-amino-acid polypeptide reads, in one-letter code: Phosphatidylcholine synthase (242 aa).

Over 1–15 the chain is Cytoplasmic; the sequence is MKIFNYKRVPYAEMR. A helical membrane pass occupies residues 16–36; it reads AFSVHILTASGSFLAFLGVVA. The Periplasmic portion of the chain corresponds to 37 to 41; the sequence is AAEHR. A helical transmembrane segment spans residues 42–62; sequence FIDMFWWLGLALLVDGIDGPI. Over 63 to 76 the chain is Cytoplasmic; that stretch reads ARKVRVKEVLPNWS. A helical transmembrane segment spans residues 77 to 97; that stretch reads GDTLDNIIDYVTYVLLPAFAL. Residues 98–100 are Periplasmic-facing; sequence YQS. The helical transmembrane segment at 101–121 threads the bilayer; it reads GMIGEPWSFVAAGMIVVSSAI. Topologically, residues 122–133 are cytoplasmic; sequence YYADMGMKTDEY. Residues 134 to 154 form a helical membrane-spanning segment; the sequence is FFSGFPVVWNMIVFTLFVIDA. The Periplasmic segment spans residues 155–159; the sequence is SATTA. The helical transmembrane segment at 160-180 threads the bilayer; the sequence is LTVVIVSVVLTFLPINFLHPV. Topologically, residues 181–187 are cytoplasmic; that stretch reads RVKRLRP. Residues 188–208 traverse the membrane as a helical segment; it reads LNLGVFFLWSALGIFSLLMHF. Residues 209 to 214 lie on the Periplasmic side of the membrane; the sequence is DTPEWA. A helical membrane pass occupies residues 215–235; it reads LILFIVTGAYLYVIGAVLQFF. The Cytoplasmic portion of the chain corresponds to 236-242; that stretch reads PALGRET.

This sequence belongs to the CDP-alcohol phosphatidyltransferase class-I family. Mn(2+) serves as cofactor.

It is found in the cell inner membrane. It catalyses the reaction a CDP-1,2-diacyl-sn-glycerol + choline = a 1,2-diacyl-sn-glycero-3-phosphocholine + CMP + H(+). Condenses choline with CDP-diglyceride to produce phosphatidylcholine and CMP. This is Phosphatidylcholine synthase from Rhizobium johnstonii (strain DSM 114642 / LMG 32736 / 3841) (Rhizobium leguminosarum bv. viciae).